Reading from the N-terminus, the 354-residue chain is Probable tartrate dehydrogenase/decarboxylase (354 aa).

Residues D221, D245, and D249 each contribute to the Mn(2+) site.

It belongs to the isocitrate and isopropylmalate dehydrogenases family. Mg(2+) serves as cofactor. It depends on Mn(2+) as a cofactor. K(+) is required as a cofactor.

It catalyses the reaction tartrate + NAD(+) = 2-hydroxy-3-oxosuccinate + NADH + H(+). It carries out the reaction (2R,3S)-tartrate + NAD(+) = 2-hydroxy-3-oxosuccinate + NADH + H(+). The enzyme catalyses (2R,3R)-tartrate + NAD(+) = 2-hydroxy-3-oxosuccinate + NADH + H(+). The catalysed reaction is (2R,3R)-tartrate + H(+) = (R)-glycerate + CO2. It catalyses the reaction (R)-malate + NAD(+) = pyruvate + CO2 + NADH. Its function is as follows. Has multiple catalytic activities. Apart from catalyzing the oxidation of (+)-tartrate to oxaloglycolate, also converts meso-tartrate to D-glycerate and catalyzes the oxidative decarboxylation of D-malate to pyruvate. The chain is Probable tartrate dehydrogenase/decarboxylase (ycsA) from Bacillus subtilis (strain 168).